The sequence spans 1078 residues: Teashirt homolog 1-A (1078 aa).

Disordered regions lie at residues 1–110, 140–197, and 271–300; these read MPRR…NVSY, KSNE…SNSA, and GHYR…MEME. Positions 26-36 are enriched in acidic residues; the sequence is IEEDNLEDDGL. Residues 57-71 are compositionally biased toward polar residues; the sequence is PSYQNSPISSATNQD. The span at 143–197 shows a compositional bias: low complexity; the sequence is ENSSPTTNTNKSSMSEATGSTSDPDTPTTIPSSSCTNTSTSISVTTSNSTNSNSA. C2H2-type zinc fingers lie at residues 248–272 and 309–333; these read FKCK…ETGH and LKCM…KTKH. Basic and acidic residues predominate over residues 271-286; the sequence is GHYRDDNKDRDAERTK. Residues 365–394 form a disordered region; the sequence is DSPEQAGISPGASVSESAKDPKAANPYVTP. A C2H2-type 3 zinc finger spans residues 418 to 442; sequence LKCMECGSSHDSLQQLTAHMMVTGH. 2 disordered regions span residues 472-524 and 850-877; these read LPPT…ENED and RLTP…EAMD. The segment covering 497-524 has biased composition (basic and acidic residues); it reads HSEEKKDPEKEKVNNCEVEKRIKEENED. The span at 853–862 shows a compositional bias: polar residues; that stretch reads PKSSTPSTVS. The segment at residues 885 to 955 is a DNA-binding region (homeobox); the sequence is RKGRQSNWNP…NVKYQLRRTG (71 aa). 2 C2H2-type zinc fingers span residues 970–992 and 1038–1061; these read FFCN…LETH and FQCK…SKTH.

The protein belongs to the teashirt C2H2-type zinc-finger protein family.

It is found in the nucleus. Its function is as follows. Probable transcriptional regulator involved in developmental processes. May act as a transcriptional repressor (Potential). Involved in two major neuronal regionalization processes: primary anteroposterior (AP) axis patterning of the CNS and segmentation of the cranial neuronal crest (CNS) development. This Xenopus laevis (African clawed frog) protein is Teashirt homolog 1-A (tshz1-a).